The primary structure comprises 331 residues: Protoheme IX farnesyltransferase (331 aa).

The next 9 membrane-spanning stretches (helical) occupy residues 22–42, 50–70, 100–120, 147–167, 174–194, 220–240, 241–261, 273–293, and 307–327; these read LVKP…MWMA, FGVT…INMV, FAGI…NLLA, IVIG…AATG, WVMF…LAIL, ILLY…PLHV, LGSF…WKAV, ATSL…AMGL, and LASL…LGAM.

Belongs to the UbiA prenyltransferase family. Protoheme IX farnesyltransferase subfamily.

It is found in the cell inner membrane. The catalysed reaction is heme b + (2E,6E)-farnesyl diphosphate + H2O = Fe(II)-heme o + diphosphate. Its pathway is porphyrin-containing compound metabolism; heme O biosynthesis; heme O from protoheme: step 1/1. Converts heme B (protoheme IX) to heme O by substitution of the vinyl group on carbon 2 of heme B porphyrin ring with a hydroxyethyl farnesyl side group. This chain is Protoheme IX farnesyltransferase, found in Synechococcus sp. (strain JA-3-3Ab) (Cyanobacteria bacterium Yellowstone A-Prime).